The following is a 378-amino-acid chain: Erythronate-4-phosphate dehydrogenase (378 aa).

Substrate contacts are provided by S45 and T66. NAD(+) contacts are provided by D146 and T175. R208 is an active-site residue. NAD(+) is bound at residue D232. E237 is a catalytic residue. H254 functions as the Proton donor in the catalytic mechanism. G257 serves as a coordination point for NAD(+). Residue Y258 participates in substrate binding.

It belongs to the D-isomer specific 2-hydroxyacid dehydrogenase family. PdxB subfamily. In terms of assembly, homodimer.

The protein resides in the cytoplasm. The catalysed reaction is 4-phospho-D-erythronate + NAD(+) = (R)-3-hydroxy-2-oxo-4-phosphooxybutanoate + NADH + H(+). Its pathway is cofactor biosynthesis; pyridoxine 5'-phosphate biosynthesis; pyridoxine 5'-phosphate from D-erythrose 4-phosphate: step 2/5. Its function is as follows. Catalyzes the oxidation of erythronate-4-phosphate to 3-hydroxy-2-oxo-4-phosphonooxybutanoate. The chain is Erythronate-4-phosphate dehydrogenase from Escherichia coli (strain K12 / MC4100 / BW2952).